The sequence spans 254 residues: Pimeloyl-[acyl-carrier protein] methyl ester esterase (254 aa).

An AB hydrolase-1 domain is found at 16 to 241; sequence LVLLHGWGMN…QSSHAPFMTE (226 aa). Substrate is bound by residues W22, 82–83, and 143–147; these read SL and FMALQ. S82 functions as the Nucleophile in the catalytic mechanism. Active-site residues include D207 and H235. H235 is a substrate binding site.

The protein belongs to the AB hydrolase superfamily. Carboxylesterase BioH family. Monomer.

The protein resides in the cytoplasm. It carries out the reaction 6-carboxyhexanoyl-[ACP] methyl ester + H2O = 6-carboxyhexanoyl-[ACP] + methanol + H(+). It functions in the pathway cofactor biosynthesis; biotin biosynthesis. Its function is as follows. The physiological role of BioH is to remove the methyl group introduced by BioC when the pimeloyl moiety is complete. It allows to synthesize pimeloyl-ACP via the fatty acid synthetic pathway through the hydrolysis of the ester bonds of pimeloyl-ACP esters. The sequence is that of Pimeloyl-[acyl-carrier protein] methyl ester esterase from Vibrio campbellii (strain ATCC BAA-1116).